The primary structure comprises 127 residues: Ribosome-binding factor A (127 aa).

The protein belongs to the RbfA family. As to quaternary structure, monomer. Binds 30S ribosomal subunits, but not 50S ribosomal subunits or 70S ribosomes.

The protein resides in the cytoplasm. Its function is as follows. One of several proteins that assist in the late maturation steps of the functional core of the 30S ribosomal subunit. Associates with free 30S ribosomal subunits (but not with 30S subunits that are part of 70S ribosomes or polysomes). Required for efficient processing of 16S rRNA. May interact with the 5'-terminal helix region of 16S rRNA. This is Ribosome-binding factor A from Stenotrophomonas maltophilia (strain R551-3).